The sequence spans 345 residues: NADPH dehydrogenase (345 aa).

FMN is bound at residue 23–26 (SPMC). Tyr-28 lines the substrate pocket. FMN-binding residues include Ala-60 and Gln-102. 164–167 (HGAH) provides a ligand contact to substrate. Residues Arg-215 and 307 to 308 (GR) each bind FMN.

This sequence belongs to the NADH:flavin oxidoreductase/NADH oxidase family. NamA subfamily. Homotetramer. The cofactor is FMN.

The catalysed reaction is A + NADPH + H(+) = AH2 + NADP(+). In terms of biological role, catalyzes the reduction of the double bond of an array of alpha,beta-unsaturated aldehydes and ketones. It also reduces the nitro group of nitroester and nitroaromatic compounds. It could have a role in detoxification processes. This is NADPH dehydrogenase from Bacillus thuringiensis (strain Al Hakam).